A 157-amino-acid polypeptide reads, in one-letter code: Cyclic pyranopterin monophosphate synthase (157 aa).

Substrate-binding positions include 74 to 76 (MCH) and 112 to 113 (ME). Asp-127 is a catalytic residue.

This sequence belongs to the MoaC family. As to quaternary structure, homohexamer; trimer of dimers.

It catalyses the reaction (8S)-3',8-cyclo-7,8-dihydroguanosine 5'-triphosphate = cyclic pyranopterin phosphate + diphosphate. The protein operates within cofactor biosynthesis; molybdopterin biosynthesis. Its function is as follows. Catalyzes the conversion of (8S)-3',8-cyclo-7,8-dihydroguanosine 5'-triphosphate to cyclic pyranopterin monophosphate (cPMP). This chain is Cyclic pyranopterin monophosphate synthase, found in Campylobacter jejuni subsp. doylei (strain ATCC BAA-1458 / RM4099 / 269.97).